The chain runs to 205 residues: Probable GTP-binding protein EngB (205 aa).

Residues Arg-8 to Glu-195 enclose the EngB-type G domain. Residues Gly-16–Ser-23, Gly-41–Ser-45, Asp-60–Gly-63, Asn-140–Asp-143, and Ile-175–Ala-177 each bind GTP. Ser-23 and Thr-43 together coordinate Mg(2+).

Belongs to the TRAFAC class TrmE-Era-EngA-EngB-Septin-like GTPase superfamily. EngB GTPase family. The cofactor is Mg(2+).

Necessary for normal cell division and for the maintenance of normal septation. The sequence is that of Probable GTP-binding protein EngB from Haloarcula marismortui (strain ATCC 43049 / DSM 3752 / JCM 8966 / VKM B-1809) (Halobacterium marismortui).